A 159-amino-acid chain; its full sequence is Ribosomal RNA large subunit methyltransferase H (159 aa).

S-adenosyl-L-methionine contacts are provided by residues leucine 76, glycine 107, and 126–131 (LSSLTL).

This sequence belongs to the RNA methyltransferase RlmH family. As to quaternary structure, homodimer.

Its subcellular location is the cytoplasm. It carries out the reaction pseudouridine(1915) in 23S rRNA + S-adenosyl-L-methionine = N(3)-methylpseudouridine(1915) in 23S rRNA + S-adenosyl-L-homocysteine + H(+). In terms of biological role, specifically methylates the pseudouridine at position 1915 (m3Psi1915) in 23S rRNA. This chain is Ribosomal RNA large subunit methyltransferase H, found in Cupriavidus necator (strain ATCC 17699 / DSM 428 / KCTC 22496 / NCIMB 10442 / H16 / Stanier 337) (Ralstonia eutropha).